The following is a 296-amino-acid chain: Formamidopyrimidine-DNA glycosylase (296 aa).

Residue proline 2 is the Schiff-base intermediate with DNA of the active site. The Proton donor role is filled by glutamate 3. Catalysis depends on lysine 58, which acts as the Proton donor; for beta-elimination activity. Residues histidine 104, arginine 126, and lysine 169 each coordinate DNA. Residues 260-296 (SVYDRAGEACRKPGCDGTVTRIVQAGRSTFHCPRCQK) form an FPG-type zinc finger. Arginine 286 functions as the Proton donor; for delta-elimination activity in the catalytic mechanism.

This sequence belongs to the FPG family. As to quaternary structure, monomer. The cofactor is Zn(2+).

The catalysed reaction is Hydrolysis of DNA containing ring-opened 7-methylguanine residues, releasing 2,6-diamino-4-hydroxy-5-(N-methyl)formamidopyrimidine.. It carries out the reaction 2'-deoxyribonucleotide-(2'-deoxyribose 5'-phosphate)-2'-deoxyribonucleotide-DNA = a 3'-end 2'-deoxyribonucleotide-(2,3-dehydro-2,3-deoxyribose 5'-phosphate)-DNA + a 5'-end 5'-phospho-2'-deoxyribonucleoside-DNA + H(+). Involved in base excision repair of DNA damaged by oxidation or by mutagenic agents. Acts as a DNA glycosylase that recognizes and removes damaged bases. Has a preference for oxidized purines, such as 7,8-dihydro-8-oxoguanine (8-oxoG). Has AP (apurinic/apyrimidinic) lyase activity and introduces nicks in the DNA strand. Cleaves the DNA backbone by beta-delta elimination to generate a single-strand break at the site of the removed base with both 3'- and 5'-phosphates. The sequence is that of Formamidopyrimidine-DNA glycosylase from Sinorhizobium fredii (strain NBRC 101917 / NGR234).